Reading from the N-terminus, the 398-residue chain is Acetate kinase (398 aa).

Asn-7 provides a ligand contact to Mg(2+). Lys-14 provides a ligand contact to ATP. Arg-92 provides a ligand contact to substrate. Catalysis depends on Asp-149, which acts as the Proton donor/acceptor. Residues 209 to 213 (HLGNG), 284 to 286 (DFR), and 332 to 336 (GVGEN) contribute to the ATP site. Glu-385 lines the Mg(2+) pocket.

The protein belongs to the acetokinase family. In terms of assembly, homodimer. Mg(2+) serves as cofactor. It depends on Mn(2+) as a cofactor.

Its subcellular location is the cytoplasm. The enzyme catalyses acetate + ATP = acetyl phosphate + ADP. The protein operates within metabolic intermediate biosynthesis; acetyl-CoA biosynthesis; acetyl-CoA from acetate: step 1/2. Functionally, catalyzes the formation of acetyl phosphate from acetate and ATP. Can also catalyze the reverse reaction. This Clostridioides difficile (strain 630) (Peptoclostridium difficile) protein is Acetate kinase.